A 695-amino-acid polypeptide reads, in one-letter code: Elongation factor G 2 (695 aa).

A tr-type G domain is found at 5–280 (SKYRNIGIFA…AVVDYLPSPT (276 aa)). GTP contacts are provided by residues 14-21 (AHVDAGKT), 78-82 (DTPGH), and 132-135 (NKLD).

The protein belongs to the TRAFAC class translation factor GTPase superfamily. Classic translation factor GTPase family. EF-G/EF-2 subfamily.

Its subcellular location is the cytoplasm. Its function is as follows. Catalyzes the GTP-dependent ribosomal translocation step during translation elongation. During this step, the ribosome changes from the pre-translocational (PRE) to the post-translocational (POST) state as the newly formed A-site-bound peptidyl-tRNA and P-site-bound deacylated tRNA move to the P and E sites, respectively. Catalyzes the coordinated movement of the two tRNA molecules, the mRNA and conformational changes in the ribosome. The chain is Elongation factor G 2 from Photobacterium profundum (strain SS9).